Consider the following 470-residue polypeptide: Proton-coupled amino acid transporter 3 (470 aa).

Residues 1 to 46 (MSLLGRDYNSELNSLDNGPQSPSESSSSITSENVHPAGEAGLSMMQ) lie on the Cytoplasmic side of the membrane. The segment covering 10–20 (SELNSLDNGPQ) has biased composition (polar residues). Positions 10 to 33 (SELNSLDNGPQSPSESSSSITSEN) are disordered. Residues 21-31 (SPSESSSSITS) are compositionally biased toward low complexity. The chain crosses the membrane as a helical span at residues 47 to 67 (TLIHLLKCNIGTGLLGLPLAI). The Extracellular portion of the chain corresponds to 68 to 71 (KNAG). A helical membrane pass occupies residues 72–92 (LLVGPVSLLAIGVLTVHCMVI). Residues 93 to 137 (LLNCAQHLSQRLQKTFVNYGEATMYGLETCPNTWLRAHAVWGRYT) lie on the Cytoplasmic side of the membrane. A helical transmembrane segment spans residues 138–158 (VSFLLVITQLGFCSVYFMFMA). Residues 159–185 (DNLQQMVEKAHVTSNICQPREILTLTP) lie on the Extracellular side of the membrane. Residues 186 to 206 (ILDIRFYMLIILPFLILLVFI) form a helical membrane-spanning segment. At 207–210 (QNLK) the chain is on the cytoplasmic side. A helical membrane pass occupies residues 211 to 231 (VLSVFSTLANITTLGSMALIF). The Extracellular segment spans residues 232–252 (EYIMEGIPYPSNLPLMANWKT). The chain crosses the membrane as a helical span at residues 253-273 (FLLFFGTAIFTFEGVGMVLPL). Residues 274-284 (KNQMKHPQQFS) lie on the Cytoplasmic side of the membrane. Residues 285–305 (FVLYLGMSIVIILYILLGTLG) form a helical membrane-spanning segment. Topologically, residues 306–337 (YMKFGSDTQASITLNLPNCWLYQSVKLMYSIG) are extracellular. Residues 338-358 (IFFTYALQFHVPAEIIIPFAI) traverse the membrane as a helical segment. At 359-367 (SQVSESWAL) the chain is on the cytoplasmic side. Residues 368-388 (FVDLSVRSALVCLTCVSAILI) traverse the membrane as a helical segment. Over 389–392 (PRLD) the chain is Extracellular. Residues 393-413 (LVISLVGSVSSSALALIIPAL) traverse the membrane as a helical segment. Topologically, residues 414-425 (LEIVIFYSEDMS) are cytoplasmic. A helical membrane pass occupies residues 426–446 (CVTIAKDIMISIVGLLGCIFG). Over 447–470 (TYQALYELPQPISHSMANSTGVHA) the chain is Extracellular.

It belongs to the amino acid/polyamine transporter 2 family. As to expression, specifically expressed in testis.

Its subcellular location is the membrane. The sequence is that of Proton-coupled amino acid transporter 3 (SLC36A3) from Homo sapiens (Human).